Reading from the N-terminus, the 786-residue chain is Mitochondrial intermediate peptidase (786 aa).

The transit peptide at 1 to 29 (MSSILLRSYRHHAKVWTRPSSKSSFIRSL) directs the protein to the mitochondrion. His567 is a Zn(2+) binding site. Glu568 is an active-site residue. Positions 571 and 574 each coordinate Zn(2+).

This sequence belongs to the peptidase M3 family. Zn(2+) is required as a cofactor.

Its subcellular location is the mitochondrion matrix. The catalysed reaction is Release of an N-terminal octapeptide as second stage of processing of some proteins imported into the mitochondrion.. In terms of biological role, cleaves proteins, imported into the mitochondrion, to their mature size. While most mitochondrial precursor proteins are processed to the mature form in one step by mitochondrial processing peptidase (MPP), the sequential cleavage by MIP of an octapeptide after initial processing by MPP is a required step for a subgroup of nuclear-encoded precursor proteins destined for the matrix or the inner membrane. This is Mitochondrial intermediate peptidase (OCT1) from Meyerozyma guilliermondii (strain ATCC 6260 / CBS 566 / DSM 6381 / JCM 1539 / NBRC 10279 / NRRL Y-324) (Yeast).